The chain runs to 185 residues: NEDD8-conjugating enzyme UBE2F (185 aa).

Met-1 carries the post-translational modification N-acetylmethionine. In terms of domain architecture, UBC core spans 32–185; the sequence is VRDKLLVKEV…VDEYIKRYAR (154 aa). Catalysis depends on Cys-116, which acts as the Glycyl thioester intermediate.

Belongs to the ubiquitin-conjugating enzyme family. UBE2F subfamily. In terms of assembly, interacts with UBA3 and RBX2. Interacts (N-terminally acetylated form) with (via DCUN1 domain) DCUN1D1, DCUN1D2, DCUN1D3, DCUN1D4 and DCUN1D5. The acetylation of Met-1 increases affinity for DCUN1D3 by about 2 orders of magnitude and is crucial for NEDD8 transfer to cullins.

The enzyme catalyses [E1 NEDD8-activating enzyme]-S-[NEDD8 protein]-yl-L-cysteine + [E2 NEDD8-conjugating enzyme]-L-cysteine = [E1 NEDD8-activating enzyme]-L-cysteine + [E2 NEDD8-conjugating enzyme]-S-[NEDD8-protein]-yl-L-cysteine.. Its pathway is protein modification; protein neddylation. Functionally, accepts the ubiquitin-like protein NEDD8 from the UBA3-NAE1 E1 complex and catalyzes its covalent attachment to other proteins. Together with the E3 ubiquitin ligase RNF7/RBX2, specifically neddylates cullin-5 (CUL5). Does not neddylate CUL1, CUL2, CUL3, CUL4A or CUL4B. Mediates neddylation of the CUL9-RBX1 complex. The polypeptide is NEDD8-conjugating enzyme UBE2F (Ube2f) (Rattus norvegicus (Rat)).